The following is a 427-amino-acid chain: G2/mitotic-specific cyclin-3 (427 aa).

Polar residues predominate over residues 1–12 (MHHNSQSLSSGH). 2 disordered regions span residues 1–29 (MHHN…NLKH) and 89–126 (SVAQ…EDQE). Over residues 89–105 (SVAQRKEADHNDLLTDR) the composition is skewed to basic and acidic residues. A compositionally biased stretch (acidic residues) spans 106–126 (EQEEPVEDDGESEEDEEEDQE).

Belongs to the cyclin family. Cyclin AB subfamily.

Its function is as follows. Essential for the control of the cell cycle at the G2/M (mitosis) transition. Interacts with the CDC2 protein kinase to form MPF. G2/M cyclins accumulate steadily during G2 and are abruptly destroyed at mitosis. In Saccharomyces cerevisiae (strain ATCC 204508 / S288c) (Baker's yeast), this protein is G2/mitotic-specific cyclin-3 (CLB3).